The primary structure comprises 148 residues: Transcriptional regulator MraZ (148 aa).

SpoVT-AbrB domains are found at residues 7 to 56 (KERH…EPDI) and 85 to 128 (LDVV…APER).

The protein belongs to the MraZ family. Forms oligomers.

Its subcellular location is the cytoplasm. The protein localises to the nucleoid. The sequence is that of Transcriptional regulator MraZ from Chlorobium phaeobacteroides (strain DSM 266 / SMG 266 / 2430).